A 134-amino-acid chain; its full sequence is Large ribosomal subunit protein eL32 (134 aa).

Belongs to the eukaryotic ribosomal protein eL32 family.

The sequence is that of Large ribosomal subunit protein eL32 (RpL32) from Spodoptera frugiperda (Fall armyworm).